The following is a 342-amino-acid chain: L-threonine 3-dehydrogenase (342 aa).

Cys39 is a Zn(2+) binding site. Residues Thr41 and His44 each act as charge relay system in the active site. Residues His64, Glu65, Cys94, Cys97, Cys100, and Cys108 each coordinate Zn(2+). NAD(+)-binding positions include Ile176, Asp196, Arg201, 263 to 265, and 287 to 288; these read LGI and IY.

Belongs to the zinc-containing alcohol dehydrogenase family. Homotetramer. It depends on Zn(2+) as a cofactor.

It localises to the cytoplasm. The catalysed reaction is L-threonine + NAD(+) = (2S)-2-amino-3-oxobutanoate + NADH + H(+). It functions in the pathway amino-acid degradation; L-threonine degradation via oxydo-reductase pathway; glycine from L-threonine: step 1/2. Its function is as follows. Catalyzes the NAD(+)-dependent oxidation of L-threonine to 2-amino-3-ketobutyrate. The sequence is that of L-threonine 3-dehydrogenase from Protochlamydia amoebophila (strain UWE25).